The following is a 185-amino-acid chain: ATP synthase subunit b, cyanelle (185 aa).

Residues 36–58 (LINLLVIFFLLIYQGRPFFTALL) traverse the membrane as a helical segment.

This sequence belongs to the ATPase B chain family. F-type ATPases have 2 components, F(1) - the catalytic core - and F(0) - the membrane proton channel. F(1) has five subunits: alpha(3), beta(3), gamma(1), delta(1), epsilon(1). F(0) has four main subunits: a(1), b(1), b'(1) and c(10-14). The alpha and beta chains form an alternating ring which encloses part of the gamma chain. F(1) is attached to F(0) by a central stalk formed by the gamma and epsilon chains, while a peripheral stalk is formed by the delta, b and b' chains.

It localises to the plastid. The protein localises to the cyanelle thylakoid membrane. Functionally, f(1)F(0) ATP synthase produces ATP from ADP in the presence of a proton or sodium gradient. F-type ATPases consist of two structural domains, F(1) containing the extramembraneous catalytic core and F(0) containing the membrane proton channel, linked together by a central stalk and a peripheral stalk. During catalysis, ATP synthesis in the catalytic domain of F(1) is coupled via a rotary mechanism of the central stalk subunits to proton translocation. In terms of biological role, component of the F(0) channel, it forms part of the peripheral stalk, linking F(1) to F(0). The sequence is that of ATP synthase subunit b, cyanelle from Cyanophora paradoxa.